Consider the following 397-residue polypeptide: 1-deoxy-D-xylulose 5-phosphate reductoisomerase (397 aa).

NADPH is bound by residues Thr-10, Gly-11, Ser-12, Ile-13, Asn-39, and Asn-125. Residue Lys-126 participates in 1-deoxy-D-xylulose 5-phosphate binding. Residue Glu-127 participates in NADPH binding. Residue Asp-151 participates in Mn(2+) binding. Positions 152, 153, 187, and 210 each coordinate 1-deoxy-D-xylulose 5-phosphate. Glu-153 is a binding site for Mn(2+). Gly-216 lines the NADPH pocket. 1-deoxy-D-xylulose 5-phosphate is bound by residues Ser-223, Asn-228, Lys-229, and Glu-232. A Mn(2+)-binding site is contributed by Glu-232.

It belongs to the DXR family. Homodimer. Requires Mg(2+) as cofactor. Mn(2+) is required as a cofactor.

The catalysed reaction is 2-C-methyl-D-erythritol 4-phosphate + NADP(+) = 1-deoxy-D-xylulose 5-phosphate + NADPH + H(+). The protein operates within isoprenoid biosynthesis; isopentenyl diphosphate biosynthesis via DXP pathway; isopentenyl diphosphate from 1-deoxy-D-xylulose 5-phosphate: step 1/6. Functionally, catalyzes the NADPH-dependent rearrangement and reduction of 1-deoxy-D-xylulose-5-phosphate (DXP) to 2-C-methyl-D-erythritol 4-phosphate (MEP). The chain is 1-deoxy-D-xylulose 5-phosphate reductoisomerase from Wigglesworthia glossinidia brevipalpis.